We begin with the raw amino-acid sequence, 289 residues long: tRNA U34 carboxymethyltransferase (289 aa).

Carboxy-S-adenosyl-L-methionine-binding positions include Lys-60, Trp-74, Lys-79, Gly-98, 120 to 122, 147 to 148, Tyr-167, and Arg-282; these read DPS and VE.

The protein belongs to the class I-like SAM-binding methyltransferase superfamily. CmoB family. As to quaternary structure, homotetramer.

It carries out the reaction carboxy-S-adenosyl-L-methionine + 5-hydroxyuridine(34) in tRNA = 5-carboxymethoxyuridine(34) in tRNA + S-adenosyl-L-homocysteine + H(+). Catalyzes carboxymethyl transfer from carboxy-S-adenosyl-L-methionine (Cx-SAM) to 5-hydroxyuridine (ho5U) to form 5-carboxymethoxyuridine (cmo5U) at position 34 in tRNAs. This chain is tRNA U34 carboxymethyltransferase, found in Campylobacter concisus (strain 13826).